The primary structure comprises 352 residues: AP2/ERF and B3 domain-containing transcription factor At1g51120 (352 aa).

Residues 1–20 (MDEMSNVAKTTTETSGLTDS) form a disordered region. Residues 7–20 (VAKTTTETSGLTDS) are compositionally biased toward polar residues. Positions 46–103 (KFKGVVQQQNGHWGAQIYADHRRIWLGTFKSAHEAAAAYDSASIKLRSFDANSHRNFP) form a DNA-binding region, AP2/ERF. The segment at residues 178-297 (FQKELTPSDV…KTFLMIDVHH (120 aa)) is a DNA-binding region (TF-B3).

It belongs to the AP2/ERF transcription factor family. RAV subfamily.

The protein localises to the nucleus. Functionally, probably acts as a transcriptional activator. Binds to the GCC-box pathogenesis-related promoter element. May be involved in the regulation of gene expression by stress factors and by components of stress signal transduction pathways. The chain is AP2/ERF and B3 domain-containing transcription factor At1g51120 from Arabidopsis thaliana (Mouse-ear cress).